Consider the following 282-residue polypeptide: Release factor glutamine methyltransferase (282 aa).

S-adenosyl-L-methionine contacts are provided by D141, F169, and N186. 186-189 (NPPY) contacts substrate.

It belongs to the protein N5-glutamine methyltransferase family. PrmC subfamily.

The catalysed reaction is L-glutaminyl-[peptide chain release factor] + S-adenosyl-L-methionine = N(5)-methyl-L-glutaminyl-[peptide chain release factor] + S-adenosyl-L-homocysteine + H(+). In terms of biological role, methylates the class 1 translation termination release factors RF1/PrfA and RF2/PrfB on the glutamine residue of the universally conserved GGQ motif. This Mycoplasma mycoides subsp. mycoides SC (strain CCUG 32753 / NCTC 10114 / PG1) protein is Release factor glutamine methyltransferase.